The chain runs to 311 residues: Glutaminase (311 aa).

Serine 66, asparagine 116, glutamate 162, asparagine 169, tyrosine 193, tyrosine 245, and valine 263 together coordinate substrate.

It belongs to the glutaminase family. As to quaternary structure, homotetramer.

It catalyses the reaction L-glutamine + H2O = L-glutamate + NH4(+). This Rhodopseudomonas palustris (strain HaA2) protein is Glutaminase.